A 167-amino-acid chain; its full sequence is Small ribosomal subunit protein uS5 (167 aa).

The 64-residue stretch at 19-82 (LTEKVLHINR…EAARKNMISC (64 aa)) folds into the S5 DRBM domain.

It belongs to the universal ribosomal protein uS5 family. Part of the 30S ribosomal subunit. Contacts proteins S4 and S8.

With S4 and S12 plays an important role in translational accuracy. Its function is as follows. Located at the back of the 30S subunit body where it stabilizes the conformation of the head with respect to the body. This Protochlamydia amoebophila (strain UWE25) protein is Small ribosomal subunit protein uS5.